The following is a 332-amino-acid chain: Putative potassium channel regulatory protein sup-10 (332 aa).

The signal sequence occupies residues 1 to 18 (MRYAVFIFLIVLIDLIYC). Topologically, residues 19-301 (WNSKRSFFIP…EISERNKRPA (283 aa)) are extracellular. N-linked (GlcNAc...) asparagine glycosylation is found at Asn61, Asn107, and Asn166. A helical membrane pass occupies residues 302-322 (FVLVGLTGGIAVIILAFSIFW). The Cytoplasmic portion of the chain corresponds to 323 to 332 (GLNGSGFNKD).

May form a complex with sup-9 and unc-93 where sup-10 and unc-93 act as regulatory subunits of the two pore potassium channel sup-9. Sup-10 may regulate sup-9 via sup-18. As to expression, low levels in body-wall muscles, eight vulval muscles, intestinal muscles and anal depressor muscle.

It localises to the membrane. In terms of biological role, may contribute to coordination of muscle contraction as regulatory subunit of a nonessential potassium channel complex. The chain is Putative potassium channel regulatory protein sup-10 from Caenorhabditis elegans.